The sequence spans 211 residues: Ion-translocating oxidoreductase complex subunit G (211 aa).

Residues 9–29 form a helical membrane-spanning segment; the sequence is GLTLAIFACATTGLVAMTQYL. FMN phosphoryl threonine is present on Thr-175.

The protein belongs to the RnfG family. In terms of assembly, the complex is composed of six subunits: RnfA, RnfB, RnfC, RnfD, RnfE and RnfG. The cofactor is FMN.

It localises to the cell inner membrane. Its function is as follows. Part of a membrane-bound complex that couples electron transfer with translocation of ions across the membrane. The chain is Ion-translocating oxidoreductase complex subunit G from Vibrio vulnificus (strain YJ016).